The sequence spans 350 residues: Guanine nucleotide-binding protein G(t) subunit alpha (350 aa).

Positions M1–E21 are disordered. The N-myristoyl glycine moiety is linked to residue G2. Residues A7–E21 show a composition bias toward basic and acidic residues. Positions R28–F350 constitute a G-alpha domain. The tract at residues K31 to T44 is G1 motif. GTP-binding positions include G36 to S43, L171 to T177, D196 to Q200, N265 to D268, and A322. S43 and T177 together coordinate Mg(2+). The segment at D169–T177 is G2 motif. The tract at residues F192–R201 is G3 motif. The interval V261 to D268 is G4 motif. Residues T320–T325 form a G5 motif region.

The protein belongs to the G-alpha family. G(i/o/t/z) subfamily. G proteins are composed of 3 units; alpha, beta and gamma. The alpha chain contains the guanine nucleotide binding site.

Its function is as follows. Guanine nucleotide-binding proteins (G proteins) are involved as modulators or transducers in various transmembrane signaling systems. Transducin is an amplifier and one of the transducers of a visual impulse that performs the coupling between rhodopsin and cGMP-phosphodiesterase. The sequence is that of Guanine nucleotide-binding protein G(t) subunit alpha (gnat) from Xenopus laevis (African clawed frog).